The primary structure comprises 98 residues: NADH-ubiquinone oxidoreductase chain 4L (98 aa).

3 helical membrane-spanning segments follow: residues 2–22, 29–49, and 61–81; these read PPIFTNVILAFATAFLGTLIF, SLLCLEGMMLSLFILSTLIIL, and ILLLVFAACEAAIGLALLVMV.

The protein belongs to the complex I subunit 4L family. In terms of assembly, core subunit of respiratory chain NADH dehydrogenase (Complex I) which is composed of 45 different subunits.

The protein resides in the mitochondrion inner membrane. The enzyme catalyses a ubiquinone + NADH + 5 H(+)(in) = a ubiquinol + NAD(+) + 4 H(+)(out). In terms of biological role, core subunit of the mitochondrial membrane respiratory chain NADH dehydrogenase (Complex I) which catalyzes electron transfer from NADH through the respiratory chain, using ubiquinone as an electron acceptor. Part of the enzyme membrane arm which is embedded in the lipid bilayer and involved in proton translocation. The sequence is that of NADH-ubiquinone oxidoreductase chain 4L (MT-ND4L) from Avahi occidentalis (Western woolly lemur).